The chain runs to 241 residues: Uracil-DNA glycosylase (241 aa).

The active-site Proton acceptor is the Asp71. The segment at 221 to 241 is disordered; the sequence is ISPIDWSLPPRNELDTTSAGA.

This sequence belongs to the uracil-DNA glycosylase (UDG) superfamily. UNG family.

It localises to the cytoplasm. It carries out the reaction Hydrolyzes single-stranded DNA or mismatched double-stranded DNA and polynucleotides, releasing free uracil.. Excises uracil residues from the DNA which can arise as a result of misincorporation of dUMP residues by DNA polymerase or due to deamination of cytosine. This chain is Uracil-DNA glycosylase, found in Xanthomonas oryzae pv. oryzae (strain MAFF 311018).